The sequence spans 204 residues: MTSMYFVAGLLLMIVQGSWQSPLQETEEKSRSFKASQAEPLDDSRQLNEVKRHSQGTFTSDYSKYLDTRRAQDFVQWLMNTKRSGQQGVEEREKENLLDQLSSNGLARHHAEYERHADGRYTSDISSYLEGQAAKEFIAWLVNGRGRRDFLEEAGTADDIGRRHADGTFTSDYNQLLDDIATQEFLKWLINQKVTQRDLLGEYQ.

An N-terminal signal peptide occupies residues 1–20 (MTSMYFVAGLLLMIVQGSWQ). Residues 84 to 109 (SGQQGVEEREKENLLDQLSSNGLARH) constitute a propeptide that is removed on maturation. R145 bears the Arginine amide mark. 2 consecutive propeptides follow at residues 149 to 161 (DFLE…DDIG) and 197 to 204 (RDLLGEYQ).

Belongs to the glucagon family. As to expression, isoform LPII is expressed in both pancreas and intestine. Expression of isoform LPI is restricted to the pancreas. Neither isoform is detected in salivary glands.

The protein resides in the secreted. Plays a key role in glucose metabolism and homeostasis. Regulates blood glucose by increasing gluconeogenesis and decreasing glycolysis. In terms of biological role, potent stimulator of glucose-dependent insulin release. Plays important roles on gastric motility and the suppression of plasma glucagon levels. Its function is as follows. Stimulates intestinal growth and up-regulates villus height in the small intestine, concomitant with increased crypt cell proliferation and decreased enterocyte apoptosis. This chain is Pro-glucagon (GCG), found in Heloderma suspectum (Gila monster).